A 175-amino-acid chain; its full sequence is Peptide deformylase (175 aa).

Fe cation is bound by residues cysteine 96 and histidine 138. Glutamate 139 is a catalytic residue. Histidine 142 is a Fe cation binding site.

It belongs to the polypeptide deformylase family. Fe(2+) is required as a cofactor.

It carries out the reaction N-terminal N-formyl-L-methionyl-[peptide] + H2O = N-terminal L-methionyl-[peptide] + formate. Removes the formyl group from the N-terminal Met of newly synthesized proteins. Requires at least a dipeptide for an efficient rate of reaction. N-terminal L-methionine is a prerequisite for activity but the enzyme has broad specificity at other positions. The polypeptide is Peptide deformylase (Helicobacter acinonychis (strain Sheeba)).